The primary structure comprises 102 residues: Small ribosomal subunit protein uS10 (102 aa).

It belongs to the universal ribosomal protein uS10 family. Part of the 30S ribosomal subunit.

In terms of biological role, involved in the binding of tRNA to the ribosomes. The polypeptide is Small ribosomal subunit protein uS10 (Streptomyces griseus subsp. griseus (strain JCM 4626 / CBS 651.72 / NBRC 13350 / KCC S-0626 / ISP 5235)).